The chain runs to 476 residues: H2.0-like homeobox protein (476 aa).

Disordered stretches follow at residues 121–170 (HLPQ…SSKD), 328–401 (WRHS…HQTT), and 413–476 (TASS…LAGL). The span at 158-168 (HHSGSAPAPSS) shows a compositional bias: low complexity. A DNA-binding region (homeobox) is located at residues 273 to 332 (RSWSRAVFSNLQRKGLEKRFEIQKYVTKPDRKQLAAMLGLTDAQVKVWFQNRRMKWRHSK). Composition is skewed to basic and acidic residues over residues 331-346 (SKEA…EAGE) and 355-368 (EGER…RSEG). Positions 369 to 379 (EAESESSDSES) are enriched in acidic residues. Residues 386 to 397 (DTERTEGTERSL) show a composition bias toward basic and acidic residues. Positions 413–446 (TASSSASGSSFSFSSSSSLGSSNGSAGSASSLGS) are enriched in low complexity. A compositionally biased stretch (polar residues) spans 455-464 (HQPSVTSGPQ).

This sequence belongs to the H2.0 homeobox family.

It is found in the nucleus. Transcription factor required for TBX21/T-bet-dependent maturation of Th1 cells as well as maintenance of Th1-specific gene expression. Involved in embryogenesis and hematopoiesis. The polypeptide is H2.0-like homeobox protein (Hlx) (Rattus norvegicus (Rat)).